Consider the following 365-residue polypeptide: Chaperone protein DnaJ (365 aa).

A J domain is found at 4–70 (DYYKILGVDR…QKRRMYDQTG (67 aa)). The segment at 139 to 220 (GTEKRIKYRR…CNGTGTVVVN (82 aa)) adopts a CR-type zinc-finger fold. C152, C155, C168, C171, C194, C197, C208, and C211 together coordinate Zn(2+). CXXCXGXG motif repeat units follow at residues 152–159 (CPDCNGTG), 168–175 (CPTCNGTG), 194–201 (CQTCGGRG), and 208–215 (CPRCNGTG).

It belongs to the DnaJ family. In terms of assembly, homodimer. Zn(2+) is required as a cofactor.

It localises to the cytoplasm. Its function is as follows. Participates actively in the response to hyperosmotic and heat shock by preventing the aggregation of stress-denatured proteins and by disaggregating proteins, also in an autonomous, DnaK-independent fashion. Unfolded proteins bind initially to DnaJ; upon interaction with the DnaJ-bound protein, DnaK hydrolyzes its bound ATP, resulting in the formation of a stable complex. GrpE releases ADP from DnaK; ATP binding to DnaK triggers the release of the substrate protein, thus completing the reaction cycle. Several rounds of ATP-dependent interactions between DnaJ, DnaK and GrpE are required for fully efficient folding. Also involved, together with DnaK and GrpE, in the DNA replication of plasmids through activation of initiation proteins. The sequence is that of Chaperone protein DnaJ from Thermoplasma acidophilum (strain ATCC 25905 / DSM 1728 / JCM 9062 / NBRC 15155 / AMRC-C165).